We begin with the raw amino-acid sequence, 815 residues long: Leucine--tRNA ligase (815 aa).

The short motif at 42–52 (PYPSGRLHMGH) is the 'HIGH' region element. The short motif at 571–575 (KMSKS) is the 'KMSKS' region element. Lysine 574 serves as a coordination point for ATP.

This sequence belongs to the class-I aminoacyl-tRNA synthetase family.

It localises to the cytoplasm. It catalyses the reaction tRNA(Leu) + L-leucine + ATP = L-leucyl-tRNA(Leu) + AMP + diphosphate. This is Leucine--tRNA ligase from Vesicomyosocius okutanii subsp. Calyptogena okutanii (strain HA).